The sequence spans 476 residues: ATP synthase subunit beta (476 aa).

Residue 154 to 161 participates in ATP binding; sequence GGAGVGKT.

The protein belongs to the ATPase alpha/beta chains family. F-type ATPases have 2 components, CF(1) - the catalytic core - and CF(0) - the membrane proton channel. CF(1) has five subunits: alpha(3), beta(3), gamma(1), delta(1), epsilon(1). CF(0) has three main subunits: a(1), b(2) and c(9-12). The alpha and beta chains form an alternating ring which encloses part of the gamma chain. CF(1) is attached to CF(0) by a central stalk formed by the gamma and epsilon chains, while a peripheral stalk is formed by the delta and b chains.

The protein localises to the cell inner membrane. The catalysed reaction is ATP + H2O + 4 H(+)(in) = ADP + phosphate + 5 H(+)(out). Produces ATP from ADP in the presence of a proton gradient across the membrane. The catalytic sites are hosted primarily by the beta subunits. This Nitrobacter hamburgensis (strain DSM 10229 / NCIMB 13809 / X14) protein is ATP synthase subunit beta.